The chain runs to 989 residues: Cellulose synthase A catalytic subunit 4 [UDP-forming] (989 aa).

The Cytoplasmic portion of the chain corresponds to 1–184 (MMESGVPPCA…SRIIPISKNK (184 aa)). Zn(2+) is bound by residues cysteine 9, cysteine 12, cysteine 20, cysteine 23, cysteine 28, cysteine 31, cysteine 43, and cysteine 46. The RING-type; degenerate zinc-finger motif lies at 9–47 (CAACGDDAHAACRACSYALCKACLDEDAAEGRTTCARCG). Basic residues predominate over residues 138–149 (KKEKKASAKKAA). The segment at 138 to 158 (KKEKKASAKKAAAKAQAPPVE) is disordered. Residues 185-205 (LTPYRAVIIMRLVVLGLFFHY) traverse the membrane as a helical segment. Residues 206–213 (RITNPVYS) are Extracellular-facing. The chain crosses the membrane as a helical span at residues 214-234 (AFGLWMTSVICEIWFGFSWIL). Residues 235-772 (DQFPKWCPIN…INTIVYPFTS (538 aa)) are Cytoplasmic-facing. The UDP-alpha-D-glucose site is built by serine 272, lysine 278, glutamate 279, and aspartate 308. Residue aspartate 308 is part of the active site. The stretch at 362-389 (VKERRAMKRDYEEYKVRINALVAKAQKT) forms a coiled coil. Lysine 449 lines the UDP-alpha-D-glucose pocket. Residues lysine 450 and aspartate 474 each contribute to the Mn(2+) site. Residue aspartate 688 is part of the active site. The chain crosses the membrane as a helical span at residues 773–793 (LPLIAYCCLPAICLLTGKFII). Residues 794–798 (PTLSN) are Extracellular-facing. A helical membrane pass occupies residues 799 to 819 (AATIWFLGLFISIIVTSVLEL). The Cytoplasmic portion of the chain corresponds to 820–835 (RWSGIGIEDWWRNEQF). The helical transmembrane segment at 836-856 (WVIGGVSAHLFAVFQGILKMI) threads the bilayer. The Extracellular portion of the chain corresponds to 857–884 (AGLDTNFTVTAKATDDTEFGELYVFKWT). Asparagine 862 carries N-linked (GlcNAc...) asparagine glycosylation. Residues 885–905 (TVLIPPTSILVLNLVGVVAGF) traverse the membrane as a helical segment. The Cytoplasmic portion of the chain corresponds to 906-916 (SDALNSGYESW). The helical transmembrane segment at 917–937 (GPLFGKVFFAMWVIMHLYPFL) threads the bilayer. Topologically, residues 938–946 (KGLMGRQNR) are extracellular. A helical membrane pass occupies residues 947–967 (TPTIVVLWSVLLASVFSLLWV). The Cytoplasmic portion of the chain corresponds to 968-989 (KIDPFIGSSETTTTNSCANFDC).

The protein belongs to the glycosyltransferase 2 family. Plant cellulose synthase subfamily. The cofactor is Mn(2+). Zn(2+) serves as cofactor.

The protein localises to the cell membrane. The catalysed reaction is [(1-&gt;4)-beta-D-glucosyl](n) + UDP-alpha-D-glucose = [(1-&gt;4)-beta-D-glucosyl](n+1) + UDP + H(+). Its pathway is glycan metabolism; plant cellulose biosynthesis. Functionally, catalytic subunit of cellulose synthase terminal complexes ('rosettes'), required for beta-1,4-glucan microfibril crystallization, a major mechanism of the cell wall formation. Involved in the secondary cell wall formation. The sequence is that of Cellulose synthase A catalytic subunit 4 [UDP-forming] (CESA4) from Oryza sativa subsp. indica (Rice).